The sequence spans 190 residues: GTP cyclohydrolase 1 (190 aa).

3 residues coordinate Zn(2+): C80, H83, and C151.

This sequence belongs to the GTP cyclohydrolase I family. As to quaternary structure, toroid-shaped homodecamer, composed of two pentamers of five dimers.

It carries out the reaction GTP + H2O = 7,8-dihydroneopterin 3'-triphosphate + formate + H(+). It participates in cofactor biosynthesis; 7,8-dihydroneopterin triphosphate biosynthesis; 7,8-dihydroneopterin triphosphate from GTP: step 1/1. This Rickettsia typhi (strain ATCC VR-144 / Wilmington) protein is GTP cyclohydrolase 1.